Consider the following 1436-residue polypeptide: Pleiotropic drug resistance protein 1 (1436 aa).

In terms of domain architecture, ABC transporter 1 spans Leu-165–Glu-438. Gly-198–Thr-205 serves as a coordination point for ATP. One can recognise an ABC transmembrane type-2 1 domain in the interval Gln-516–Phe-729. 7 helical membrane passes run Phe-534–Phe-554, Gly-567–Ser-587, Ile-622–Phe-642, Phe-653–Val-673, Val-679–Leu-699, Trp-707–Asn-727, and Ile-764–Leu-784. The segment at Thr-796 to Lys-826 is disordered. The segment covering Pro-810–Ala-821 has biased composition (polar residues). The region spanning Ile-838–Pro-1090 is the ABC transporter 2 domain. Gly-883–Thr-890 is a binding site for ATP. The ABC transmembrane type-2 2 domain maps to Thr-1163–Phe-1377. 7 helical membrane passes run Ala-1184 to Ile-1204, Leu-1214 to Ser-1234, Ile-1270 to Phe-1290, Phe-1301 to Val-1321, Val-1327 to Val-1347, Trp-1358 to Gly-1378, and Val-1408 to Ile-1428.

It belongs to the ABC transporter superfamily. ABCG family. PDR (TC 3.A.1.205) subfamily. In terms of tissue distribution, roots, petals and leaf epidermis, where it is confined to glandular trichomes (at protein level).

It is found in the cell membrane. Functionally, excretes secondary metabolites such as terpenes. Involved in both constitutive and jasmonic acid-dependent induced defense. Confers some resistance to sclareol and B.cinerea. This Nicotiana plumbaginifolia (Leadwort-leaved tobacco) protein is Pleiotropic drug resistance protein 1 (PDR1).